Here is a 102-residue protein sequence, read N- to C-terminus: Protein AC4 (102 aa).

The protein belongs to the geminiviridae protein AC4/C4 family.

In terms of biological role, pathogenicity determinant. May act as a suppressor of RNA-mediated gene silencing, also known as post-transcriptional gene silencing (PTGS), a mechanism of plant viral defense that limits the accumulation of viral RNAs. The protein is Protein AC4 of Indian cassava mosaic virus (ICMV).